Consider the following 154-residue polypeptide: 6,7-dimethyl-8-ribityllumazine synthase (154 aa).

5-amino-6-(D-ribitylamino)uracil is bound by residues Phe22, 56–58 (AFE), and 80–82 (TVI). Residue 85–86 (ST) participates in (2S)-2-hydroxy-3-oxobutyl phosphate binding. His88 functions as the Proton donor in the catalytic mechanism. 5-amino-6-(D-ribitylamino)uracil is bound at residue Phe113. (2S)-2-hydroxy-3-oxobutyl phosphate is bound at residue Arg127.

This sequence belongs to the DMRL synthase family.

It carries out the reaction (2S)-2-hydroxy-3-oxobutyl phosphate + 5-amino-6-(D-ribitylamino)uracil = 6,7-dimethyl-8-(1-D-ribityl)lumazine + phosphate + 2 H2O + H(+). It participates in cofactor biosynthesis; riboflavin biosynthesis; riboflavin from 2-hydroxy-3-oxobutyl phosphate and 5-amino-6-(D-ribitylamino)uracil: step 1/2. Functionally, catalyzes the formation of 6,7-dimethyl-8-ribityllumazine by condensation of 5-amino-6-(D-ribitylamino)uracil with 3,4-dihydroxy-2-butanone 4-phosphate. This is the penultimate step in the biosynthesis of riboflavin. The chain is 6,7-dimethyl-8-ribityllumazine synthase from Lactococcus lactis subsp. lactis (strain IL1403) (Streptococcus lactis).